The sequence spans 475 residues: Bifunctional aspartate aminotransferase and glutamate/aspartate-prephenate aminotransferase (475 aa).

A chloroplast-targeting transit peptide spans 1–55 (MASQSSVAVISSAAARGESFPDSKKPIGSVRFQQPLRLSFSYCKSGNMSSRICAM). The L-aspartate site is built by glycine 107, tryptophan 193, and asparagine 243. Position 306 is an N6-(pyridoxal phosphate)lysine (lysine 306). Arginine 445 provides a ligand contact to L-aspartate.

Belongs to the class-I pyridoxal-phosphate-dependent aminotransferase family. Homodimer. Pyridoxal 5'-phosphate serves as cofactor.

It localises to the plastid. The protein localises to the chloroplast. It carries out the reaction L-aspartate + 2-oxoglutarate = oxaloacetate + L-glutamate. The enzyme catalyses L-arogenate + oxaloacetate = prephenate + L-aspartate. The catalysed reaction is L-arogenate + 2-oxoglutarate = prephenate + L-glutamate. It functions in the pathway amino-acid biosynthesis; L-phenylalanine biosynthesis; L-arogenate from prephenate (L-Asp route): step 1/1. Its pathway is amino-acid biosynthesis; L-phenylalanine biosynthesis; L-arogenate from prephenate (L-Glu route): step 1/1. Functionally, prokaryotic-type aspartate aminotransferase. Also has a prenate transaminase activity. Involved in the aromatic amino acids biosynthesis pathway via the arogenate route. Required for the transamination of prephenate into arogenate. Required for early development of the embryo. This chain is Bifunctional aspartate aminotransferase and glutamate/aspartate-prephenate aminotransferase (PAT), found in Arabidopsis thaliana (Mouse-ear cress).